Reading from the N-terminus, the 422-residue chain is UDP-N-acetylglucosamine 1-carboxyvinyltransferase 2 (422 aa).

22-23 (KN) lines the phosphoenolpyruvate pocket. Arg93 provides a ligand contact to UDP-N-acetyl-alpha-D-glucosamine. Cys117 serves as the catalytic Proton donor. Cys117 bears the 2-(S-cysteinyl)pyruvic acid O-phosphothioketal mark. Residues 122–126 (RPVDL), Asp308, and Ile330 contribute to the UDP-N-acetyl-alpha-D-glucosamine site.

It belongs to the EPSP synthase family. MurA subfamily.

The protein localises to the cytoplasm. It catalyses the reaction phosphoenolpyruvate + UDP-N-acetyl-alpha-D-glucosamine = UDP-N-acetyl-3-O-(1-carboxyvinyl)-alpha-D-glucosamine + phosphate. It participates in cell wall biogenesis; peptidoglycan biosynthesis. Cell wall formation. Adds enolpyruvyl to UDP-N-acetylglucosamine. This Legionella pneumophila (strain Lens) protein is UDP-N-acetylglucosamine 1-carboxyvinyltransferase 2.